A 475-amino-acid chain; its full sequence is Sulfate adenylyltransferase subunit 1 (475 aa).

Positions 25 to 239 (KSLLRFLTCG…EVLETVEIQR (215 aa)) constitute a tr-type G domain. A G1 region spans residues 34 to 41 (GSVDDGKS). 34–41 (GSVDDGKS) lines the GTP pocket. Residues 92 to 96 (GITID) form a G2 region. The interval 113-116 (DTPG) is G3. GTP contacts are provided by residues 113 to 117 (DTPGH) and 168 to 171 (NKMD). A G4 region spans residues 168–171 (NKMD). Residues 206–208 (SAL) are G5.

The protein belongs to the TRAFAC class translation factor GTPase superfamily. Classic translation factor GTPase family. CysN/NodQ subfamily. Heterodimer composed of CysD, the smaller subunit, and CysN.

It carries out the reaction sulfate + ATP + H(+) = adenosine 5'-phosphosulfate + diphosphate. It participates in sulfur metabolism; hydrogen sulfide biosynthesis; sulfite from sulfate: step 1/3. Functionally, with CysD forms the ATP sulfurylase (ATPS) that catalyzes the adenylation of sulfate producing adenosine 5'-phosphosulfate (APS) and diphosphate, the first enzymatic step in sulfur assimilation pathway. APS synthesis involves the formation of a high-energy phosphoric-sulfuric acid anhydride bond driven by GTP hydrolysis by CysN coupled to ATP hydrolysis by CysD. The polypeptide is Sulfate adenylyltransferase subunit 1 (Citrobacter koseri (strain ATCC BAA-895 / CDC 4225-83 / SGSC4696)).